Here is a 477-residue protein sequence, read N- to C-terminus: Enolase 1, chloroplastic (477 aa).

Residues 1-41 (MALTTKPHHLQRSFLSPSRVSGERYLESAPSCLRFRRSGVQ) constitute a chloroplast transit peptide. 2 residues coordinate substrate: histidine 203 and glutamate 212. The active-site Proton donor is the glutamate 255. The Mg(2+) site is built by aspartate 290, glutamate 340, and aspartate 365. Substrate contacts are provided by glutamate 340 and aspartate 365. Lysine 390 acts as the Proton acceptor in catalysis. Substrate is bound by residues 417–420 (SHRS) and lysine 441. Serine 476 is subject to Phosphoserine.

It belongs to the enolase family. It depends on Mg(2+) as a cofactor. Highly expressed in young roots, young siliques, and shoot apex. Lowly expressed in young leaves, stems and cotyledons.

The protein localises to the plastid. Its subcellular location is the chloroplast. It carries out the reaction (2R)-2-phosphoglycerate = phosphoenolpyruvate + H2O. Its pathway is carbohydrate degradation; glycolysis; pyruvate from D-glyceraldehyde 3-phosphate: step 4/5. In Arabidopsis thaliana (Mouse-ear cress), this protein is Enolase 1, chloroplastic (ENO1).